The following is a 348-amino-acid chain: Flagellar P-ring protein (348 aa).

The N-terminal stretch at 1–16 (MRIFLLCLALSLSVFA) is a signal peptide.

Belongs to the FlgI family. In terms of assembly, the basal body constitutes a major portion of the flagellar organelle and consists of four rings (L,P,S, and M) mounted on a central rod.

The protein resides in the periplasm. Its subcellular location is the bacterial flagellum basal body. Functionally, assembles around the rod to form the L-ring and probably protects the motor/basal body from shearing forces during rotation. The sequence is that of Flagellar P-ring protein from Campylobacter lari (strain RM2100 / D67 / ATCC BAA-1060).